Consider the following 80-residue polypeptide: UPF0154 protein SZO_03240 (80 aa).

Residues 4–24 (AIWILLIIVALTAGLFGGIFI) form a helical membrane-spanning segment.

This sequence belongs to the UPF0154 family.

The protein resides in the cell membrane. This Streptococcus equi subsp. zooepidemicus (strain H70) protein is UPF0154 protein SZO_03240.